The primary structure comprises 470 residues: Acetyl-CoA decarbonylase/synthase complex subunit beta 2 (470 aa).

Positions 190, 193, 279, and 281 each coordinate [Ni-Fe-S] cluster.

Belongs to the CdhC family. In terms of assembly, monomer. The ACDS complex is made up of alpha, epsilon, beta, gamma and delta chains with a probable stoichiometry of (alpha(2)epsilon(2))(4)-beta(8)-(gamma(1)delta(1))(8) (Potential). The cofactor is [Ni-Fe-S] cluster.

It carries out the reaction Co(I)-[corrinoid Fe-S protein] + acetyl-CoA + H(+) = methyl-Co(III)-[corrinoid Fe-S protein] + CO + CoA. Its pathway is one-carbon metabolism; methanogenesis from acetate. Functionally, part of a complex that catalyzes the reversible cleavage of acetyl-CoA, allowing growth on acetate as sole source of carbon and energy. The alpha-epsilon complex generates CO from CO(2), while the beta subunit (this protein) combines the CO with CoA and a methyl group to form acetyl-CoA. The methyl group, which is incorporated into acetyl-CoA, is transferred to the beta subunit by a corrinoid iron-sulfur protein (the gamma-delta complex). The protein is Acetyl-CoA decarbonylase/synthase complex subunit beta 2 (cdhC2) of Methanosarcina mazei (strain ATCC BAA-159 / DSM 3647 / Goe1 / Go1 / JCM 11833 / OCM 88) (Methanosarcina frisia).